The following is a 234-amino-acid chain: tRNA1(Val) (adenine(37)-N6)-methyltransferase (234 aa).

It belongs to the methyltransferase superfamily. tRNA (adenine-N(6)-)-methyltransferase family.

It localises to the cytoplasm. The catalysed reaction is adenosine(37) in tRNA1(Val) + S-adenosyl-L-methionine = N(6)-methyladenosine(37) in tRNA1(Val) + S-adenosyl-L-homocysteine + H(+). Functionally, specifically methylates the adenine in position 37 of tRNA(1)(Val) (anticodon cmo5UAC). The sequence is that of tRNA1(Val) (adenine(37)-N6)-methyltransferase from Pedobacter heparinus (strain ATCC 13125 / DSM 2366 / CIP 104194 / JCM 7457 / NBRC 12017 / NCIMB 9290 / NRRL B-14731 / HIM 762-3).